Here is a 424-residue protein sequence, read N- to C-terminus: Glutamyl-tRNA reductase (424 aa).

Residues 49-52, Ser108, 113-115, and Gln119 contribute to the substrate site; these read TCNR and EPQ. The Nucleophile role is filled by Cys50. 188–193 serves as a coordination point for NADP(+); the sequence is GAGETI.

It belongs to the glutamyl-tRNA reductase family. Homodimer.

It catalyses the reaction (S)-4-amino-5-oxopentanoate + tRNA(Glu) + NADP(+) = L-glutamyl-tRNA(Glu) + NADPH + H(+). The protein operates within porphyrin-containing compound metabolism; protoporphyrin-IX biosynthesis; 5-aminolevulinate from L-glutamyl-tRNA(Glu): step 1/2. Functionally, catalyzes the NADPH-dependent reduction of glutamyl-tRNA(Glu) to glutamate 1-semialdehyde (GSA). The polypeptide is Glutamyl-tRNA reductase (Hahella chejuensis (strain KCTC 2396)).